We begin with the raw amino-acid sequence, 92 residues long: Kinetoplastid membrane protein 11B (92 aa).

It belongs to the KMP-11 family. As to quaternary structure, monomer.

The protein localises to the cytoplasm. The protein resides in the cytoskeleton. Its subcellular location is the cell projection. It localises to the cilium. It is found in the flagellum. In terms of biological role, may be involved in the regulation of the cytoskeleton through interaction with the subpellicular microtubules. May be involved in parasite mobility and attachment to the surface of the host cell. Behaves as a strong immunogen during infection. This chain is Kinetoplastid membrane protein 11B (KMP-11B), found in Leishmania infantum.